A 383-amino-acid polypeptide reads, in one-letter code: Succinate--CoA ligase [ADP-forming] subunit beta (383 aa).

The 228-residue stretch at 9–236 (KELLGRFGLR…VEAADPQEHR (228 aa)) folds into the ATP-grasp domain. Residues Lys45, 52–54 (GRG), Glu91, Ala94, and Glu99 contribute to the ATP site. Asn191 and Asp205 together coordinate Mg(2+). Substrate-binding positions include Asn256 and 313–315 (GIT).

This sequence belongs to the succinate/malate CoA ligase beta subunit family. Heterotetramer of two alpha and two beta subunits. The cofactor is Mg(2+).

The enzyme catalyses succinate + ATP + CoA = succinyl-CoA + ADP + phosphate. It catalyses the reaction GTP + succinate + CoA = succinyl-CoA + GDP + phosphate. Its pathway is carbohydrate metabolism; tricarboxylic acid cycle; succinate from succinyl-CoA (ligase route): step 1/1. Functionally, succinyl-CoA synthetase functions in the citric acid cycle (TCA), coupling the hydrolysis of succinyl-CoA to the synthesis of either ATP or GTP and thus represents the only step of substrate-level phosphorylation in the TCA. The beta subunit provides nucleotide specificity of the enzyme and binds the substrate succinate, while the binding sites for coenzyme A and phosphate are found in the alpha subunit. In Rubrobacter xylanophilus (strain DSM 9941 / JCM 11954 / NBRC 16129 / PRD-1), this protein is Succinate--CoA ligase [ADP-forming] subunit beta.